Consider the following 444-residue polypeptide: UDP-N-acetylmuramoylalanine--D-glutamate ligase (444 aa).

109 to 115 (GSNGKTT) lines the ATP pocket.

It belongs to the MurCDEF family.

Its subcellular location is the cytoplasm. It carries out the reaction UDP-N-acetyl-alpha-D-muramoyl-L-alanine + D-glutamate + ATP = UDP-N-acetyl-alpha-D-muramoyl-L-alanyl-D-glutamate + ADP + phosphate + H(+). It functions in the pathway cell wall biogenesis; peptidoglycan biosynthesis. In terms of biological role, cell wall formation. Catalyzes the addition of glutamate to the nucleotide precursor UDP-N-acetylmuramoyl-L-alanine (UMA). This Bacteroides fragilis (strain ATCC 25285 / DSM 2151 / CCUG 4856 / JCM 11019 / LMG 10263 / NCTC 9343 / Onslow / VPI 2553 / EN-2) protein is UDP-N-acetylmuramoylalanine--D-glutamate ligase.